The chain runs to 382 residues: LIM homeobox transcription factor 1-alpha (382 aa).

LIM zinc-binding domains are found at residues 33-92 (SVCE…LFAV) and 92-154 (VKCG…EREL). 2 disordered regions span residues 161 to 208 (AASD…QQRR) and 252 to 285 (KLARRQQQQQQDQQNTQRLSSAQTNGGGSAGMEG). Positions 195–254 (PKRPRTILTTQQRRAFKASFEVSSKPCRKVRETLAAETGLSVRVVQVWFQNQRAKMKKLA) form a DNA-binding region, homeobox. The span at 256-269 (RQQQQQQDQQNTQR) shows a compositional bias: low complexity.

As to expression, isoform 1 is expressed in many tissues. Not found in heart, liver, spleen and testis. Relatively highly expressed in fetal brain. Isoform LMX1A-4AB is expressed in testis.

The protein resides in the nucleus. In terms of biological role, acts as a transcriptional activator by binding to an A/T-rich sequence, the FLAT element, in the insulin gene promoter. Required for development of the roof plate and, in turn, for specification of dorsal cell fates in the CNS and developing vertebrae. This chain is LIM homeobox transcription factor 1-alpha (LMX1A), found in Homo sapiens (Human).